Reading from the N-terminus, the 466-residue chain is Chromosomal replication initiator protein DnaA (466 aa).

Residues 1-86 (MSLSLWQQCL…EVGTKPVTQT (86 aa)) form a domain I, interacts with DnaA modulators region. Residues 86-129 (TLKTPVHNVVAPTQTTTAQPQRVAPAARSGWDNVPAPAEPTYRS) form a domain II region. The tract at residues 130 to 346 (NVNVKHTFDN…GALNRVIANA (217 aa)) is domain III, AAA+ region. ATP contacts are provided by G174, G176, K177, and T178. Residues 347–466 (NFTGRAITID…FSNLIRTLSS (120 aa)) form a domain IV, binds dsDNA region.

Belongs to the DnaA family. Oligomerizes as a right-handed, spiral filament on DNA at oriC.

It localises to the cytoplasm. Plays an essential role in the initiation and regulation of chromosomal replication. ATP-DnaA binds to the origin of replication (oriC) to initiate formation of the DNA replication initiation complex once per cell cycle. Binds the DnaA box (a 9 base pair repeat at the origin) and separates the double-stranded (ds)DNA. Forms a right-handed helical filament on oriC DNA; dsDNA binds to the exterior of the filament while single-stranded (ss)DNA is stabiized in the filament's interior. The ATP-DnaA-oriC complex binds and stabilizes one strand of the AT-rich DNA unwinding element (DUE), permitting loading of DNA polymerase. After initiation quickly degrades to an ADP-DnaA complex that is not apt for DNA replication. Binds acidic phospholipids. The chain is Chromosomal replication initiator protein DnaA from Salmonella gallinarum (strain 287/91 / NCTC 13346).